The sequence spans 213 residues: Transcription antitermination protein NusB (213 aa).

It belongs to the NusB family.

Its function is as follows. Involved in transcription antitermination. Required for transcription of ribosomal RNA (rRNA) genes. Binds specifically to the boxA antiterminator sequence of the ribosomal RNA (rrn) operons. The protein is Transcription antitermination protein NusB of Nostoc punctiforme (strain ATCC 29133 / PCC 73102).